A 600-amino-acid polypeptide reads, in one-letter code: Probable tripeptidyl-peptidase SED4 (600 aa).

Residues 1–22 (MVSFTLRAIGACLIGLPALITA) form the signal peptide. A propeptide spans 23-202 (APTSHVSNDF…SVFTSDLEIT (180 aa)) (removed in mature form). N-linked (GlcNAc...) asparagine glycans are attached at residues asparagine 210 and asparagine 281. The region spanning 212-600 (TITPDCIREL…FEKLSKLVLI (389 aa)) is the Peptidase S53 domain. Residues glutamate 288 and aspartate 292 each act as charge relay system in the active site. Asparagine 323 and asparagine 404 each carry an N-linked (GlcNAc...) asparagine glycan. Serine 504 (charge relay system) is an active-site residue. 2 residues coordinate Ca(2+): aspartate 546 and isoleucine 547. The N-linked (GlcNAc...) asparagine glycan is linked to asparagine 575. Glycine 579 and aspartate 581 together coordinate Ca(2+).

It depends on Ca(2+) as a cofactor.

The protein resides in the secreted. The protein localises to the extracellular space. It catalyses the reaction Release of an N-terminal tripeptide from a polypeptide.. In terms of biological role, secreted tripeptidyl-peptidase which degrades proteins at acidic pHs and is involved in virulence. The polypeptide is Probable tripeptidyl-peptidase SED4 (SED4) (Arthroderma benhamiae (strain ATCC MYA-4681 / CBS 112371) (Trichophyton mentagrophytes)).